Reading from the N-terminus, the 20-residue chain is M-poneritoxin-Ng1f (20 aa).

Position 20 is a lysine amide (Lys-20).

As to expression, expressed by the venom gland.

The protein resides in the secreted. Its subcellular location is the target cell membrane. Functionally, has activity against Gram-positive bacteria. Has insecticidal and hemolytic activities. May act by disrupting the integrity of the bacterial cell membrane. This chain is M-poneritoxin-Ng1f, found in Neoponera goeldii (Ponerine ant).